Consider the following 322-residue polypeptide: Extracellular metalloprotease AFUA_1G07730 (322 aa).

An N-terminal signal peptide occupies residues 1-22 (MLPFNSCVYVLLIISLMSNCRA). Asn-123 and Asn-197 each carry an N-linked (GlcNAc...) asparagine glycan. His-233 is a binding site for Zn(2+). The active site involves Glu-234. His-237 contacts Zn(2+). Cys-272 and Cys-299 are joined by a disulfide.

It belongs to the peptidase M43B family.

Its subcellular location is the secreted. Its function is as follows. Secreted metalloproteinase that allows assimilation of proteinaceous substrates. Plays a pivotal role as a pathogenicity determinant during infections and contributes to the ability of the pathogen to persist within the mammalian host. This is Extracellular metalloprotease AFUA_1G07730 from Aspergillus fumigatus (strain ATCC MYA-4609 / CBS 101355 / FGSC A1100 / Af293) (Neosartorya fumigata).